The chain runs to 764 residues: 5-methyltetrahydropteroyltriglutamate--homocysteine methyltransferase (764 aa).

Residues 16–19 (RELK) and lysine 115 contribute to the 5-methyltetrahydropteroyltri-L-glutamate site. L-homocysteine contacts are provided by residues 435 to 437 (IGS) and glutamate 488. Residues 435-437 (IGS) and glutamate 488 each bind L-methionine. 5-methyltetrahydropteroyltri-L-glutamate-binding positions include 519–520 (RC) and tryptophan 565. Aspartate 603 serves as a coordination point for L-homocysteine. Aspartate 603 lines the L-methionine pocket. Glutamate 609 contributes to the 5-methyltetrahydropteroyltri-L-glutamate binding site. Histidine 645, cysteine 647, and glutamate 669 together coordinate Zn(2+). Histidine 698 (proton donor) is an active-site residue. Cysteine 730 is a Zn(2+) binding site.

It belongs to the vitamin-B12 independent methionine synthase family. It depends on Zn(2+) as a cofactor.

The catalysed reaction is 5-methyltetrahydropteroyltri-L-glutamate + L-homocysteine = tetrahydropteroyltri-L-glutamate + L-methionine. Its pathway is amino-acid biosynthesis; L-methionine biosynthesis via de novo pathway; L-methionine from L-homocysteine (MetE route): step 1/1. Its function is as follows. Catalyzes the transfer of a methyl group from 5-methyltetrahydrofolate to homocysteine resulting in methionine formation. The polypeptide is 5-methyltetrahydropteroyltriglutamate--homocysteine methyltransferase (Burkholderia mallei (strain NCTC 10247)).